Reading from the N-terminus, the 395-residue chain is Major outer membrane porin, serovar F (395 aa).

The signal sequence occupies residues 1–22 (MKKLLKSVLVFAALSSASSLQA).

The protein belongs to the chlamydial porin (CP) (TC 1.B.2) family. In terms of assembly, part of a disulfide cross-linked outer membrane complex (COMC) composed of the major outer membrane porin (MOMP), the small cysteine-rich protein (OmcA) and the large cysteine-rich periplasmic protein (OmcB).

The protein localises to the cell outer membrane. Its function is as follows. In elementary bodies (EBs, the infectious stage, which is able to survive outside the host cell) provides the structural integrity of the outer envelope through disulfide cross-links with the small cysteine-rich protein and the large cysteine-rich periplasmic protein. It has been described in publications as the Sarkosyl-insoluble COMC (Chlamydia outer membrane complex), and serves as the functional equivalent of peptidoglycan. Functionally, permits diffusion of specific solutes through the outer membrane. This Chlamydia trachomatis protein is Major outer membrane porin, serovar F (ompA).